The primary structure comprises 1037 residues: Exportin-T (1037 aa).

This sequence belongs to the exportin family.

It localises to the nucleus. It is found in the cytoplasm. Functionally, tRNA nucleus export receptor which facilitates tRNA translocation across the nuclear pore complex. Involved in pre-tRNA splicing, probably by affecting the interaction of pre-tRNA with splicing endonuclease. This chain is Exportin-T (los1), found in Neosartorya fischeri (strain ATCC 1020 / DSM 3700 / CBS 544.65 / FGSC A1164 / JCM 1740 / NRRL 181 / WB 181) (Aspergillus fischerianus).